We begin with the raw amino-acid sequence, 238 residues long: Large ribosomal subunit protein uL2 (238 aa).

The disordered stretch occupies residues 198–238; it reads NHPHGGGSHQSPSFPTTVSRNAPPGRKVGHIAARSTGRRKR. Positions 206–217 are enriched in polar residues; it reads HQSPSFPTTVSR.

Belongs to the universal ribosomal protein uL2 family. Part of the 50S ribosomal subunit. Forms a bridge to the 30S subunit in the 70S ribosome.

Its function is as follows. One of the primary rRNA binding proteins. Required for association of the 30S and 50S subunits to form the 70S ribosome, for tRNA binding and peptide bond formation. It has been suggested to have peptidyltransferase activity; this is somewhat controversial. Makes several contacts with the 16S rRNA in the 70S ribosome. This Hyperthermus butylicus (strain DSM 5456 / JCM 9403 / PLM1-5) protein is Large ribosomal subunit protein uL2.